The primary structure comprises 263 residues: Proteasome subunit alpha (263 aa).

The segment at 229–263 (AALLQDTPPDDADADADAGKKPANDGNLPPNDDKS) is disordered.

This sequence belongs to the peptidase T1A family. As to quaternary structure, the 20S proteasome core is composed of 14 alpha and 14 beta subunits that assemble into four stacked heptameric rings, resulting in a barrel-shaped structure. The two inner rings, each composed of seven catalytic beta subunits, are sandwiched by two outer rings, each composed of seven alpha subunits. The catalytic chamber with the active sites is on the inside of the barrel. Has a gated structure, the ends of the cylinder being occluded by the N-termini of the alpha-subunits. Is capped by the proteasome-associated ATPase, ARC.

It localises to the cytoplasm. It participates in protein degradation; proteasomal Pup-dependent pathway. The formation of the proteasomal ATPase ARC-20S proteasome complex, likely via the docking of the C-termini of ARC into the intersubunit pockets in the alpha-rings, may trigger opening of the gate for substrate entry. Interconversion between the open-gate and close-gate conformations leads to a dynamic regulation of the 20S proteasome proteolysis activity. Its function is as follows. Component of the proteasome core, a large protease complex with broad specificity involved in protein degradation. This Actinosynnema mirum (strain ATCC 29888 / DSM 43827 / JCM 3225 / NBRC 14064 / NCIMB 13271 / NRRL B-12336 / IMRU 3971 / 101) protein is Proteasome subunit alpha.